Consider the following 172-residue polypeptide: UPF0114 protein PMI3225 (172 aa).

The next 4 membrane-spanning stretches (helical) occupy residues 15–35, 57–77, 108–128, and 136–156; these read LFAP…IKFF, LLSL…IFSG, KVAA…FMDL, and LLWY…MGYL.

It belongs to the UPF0114 family.

The protein localises to the cell membrane. The chain is UPF0114 protein PMI3225 from Proteus mirabilis (strain HI4320).